Reading from the N-terminus, the 495-residue chain is Glutamyl-tRNA(Gln) amidotransferase subunit A (495 aa).

Residues K79 and S159 each act as charge relay system in the active site. S183 acts as the Acyl-ester intermediate in catalysis.

This sequence belongs to the amidase family. GatA subfamily. In terms of assembly, heterotrimer of A, B and C subunits.

It catalyses the reaction L-glutamyl-tRNA(Gln) + L-glutamine + ATP + H2O = L-glutaminyl-tRNA(Gln) + L-glutamate + ADP + phosphate + H(+). In terms of biological role, allows the formation of correctly charged Gln-tRNA(Gln) through the transamidation of misacylated Glu-tRNA(Gln) in organisms which lack glutaminyl-tRNA synthetase. The reaction takes place in the presence of glutamine and ATP through an activated gamma-phospho-Glu-tRNA(Gln). The chain is Glutamyl-tRNA(Gln) amidotransferase subunit A from Gluconobacter oxydans (strain 621H) (Gluconobacter suboxydans).